A 396-amino-acid chain; its full sequence is Putative transposase y4rJ (396 aa).

This sequence belongs to the transposase 20 family.

This chain is Putative transposase y4rJ, found in Sinorhizobium fredii (strain NBRC 101917 / NGR234).